A 672-amino-acid chain; its full sequence is Synaptotagmin-like protein 4 (672 aa).

Residues Ile4 to Gln122 enclose the RabBD domain. An FYVE-type zinc finger spans residues Cys63–Cys105. Residues Ser199–Gly222 are disordered. Residues Ser201, Ser204, Ser217, Ser221, and Ser274 each carry the phosphoserine modification. One can recognise a C2 1 domain in the interval Val357–Leu479. Position 489 is a phosphoserine (Ser489). One can recognise a C2 2 domain in the interval Pro508 to Met634.

In terms of assembly, part of a ternary complex containing STX1A and RAB27A. Can bind both dominant negative and dominant active mutants of RAB27A. Binds STXBP1, RAB3A, RAB8A and RAB27B. Interacts with MYO5A. Detected in insulin-secreting cell lines.

It is found in the membrane. It localises to the cytoplasmic vesicle. Its subcellular location is the secretory vesicle membrane. Modulates exocytosis of dense-core granules and secretion of hormones in the pancreas and the pituitary. Interacts with vesicles containing negatively charged phospholipids in a Ca(2+)-independent manner. In Rattus norvegicus (Rat), this protein is Synaptotagmin-like protein 4 (Sytl4).